We begin with the raw amino-acid sequence, 578 residues long: MHSVETFNLPALNSLLETTARRFGNRLAVQDDNGSLTFADFVEKVGILSAKLRLVIKRGEHVAVQLPRGINYIVAAYAIWEAGGVYLPLDNQWPSSRIEGILHRSHVRVLIHTSQADQGLELTELPAETRAESPVAGTPAYIIHTSGTTGEPKGVVVSHESLIHLVESHQRDIYQAYDVTEGPVAINASFCFDSALERMALVALGYSLHVVSDQVRKSPYELVKYLRDNSIVNVDLVPSHLKVLLSAGLNEKCDALRLVIVGGEAIDAELWREIVQNQAIYINVYGPTENTINTSFCEIRGETPHIGRPFKNVTCLLLNENGERCAAGEEGELLVAGRHLAQGYYNAPDLTDRVFVHIDGIRYYRTGDRVRQNEQGNLLYLGRIDDQVKINGFRIELADVQHNLTQLPGVKYAAVTPIKLPTGQGLLASIVWNSDAPEQTFSNLEALLGEKLPSYMVPTRWQKLDALPLTDNLKLDHKSLLSHWKNSQEQIGEKFAAESISATEHQIKNLWQKILRQPSLSPDAHFFASGGDSMAAMTLLVELKKVTPQDVSLGDIFKYPTIRKMAAWLDASSVQAES.

Positions 498–573 (ESISATEHQI…KMAAWLDASS (76 aa)) constitute a Carrier domain. Serine 533 carries the O-(pantetheine 4'-phosphoryl)serine modification.

Belongs to the ATP-dependent AMP-binding enzyme family. Requires pantetheine 4'-phosphate as cofactor.

The protein operates within antibiotic biosynthesis. Involved in dapdiamide antibiotics biosynthesis. Activates and sequesters N-beta-fumaramoyl-DAP as a covalently tethered thioester for subsequent oxidative modification of the fumaramoyl group. The chain is Dapdiamide synthesis protein DdaD from Enterobacter agglomerans (Erwinia herbicola).